Here is a 182-residue protein sequence, read N- to C-terminus: R-phycoerythrin subunit beta (182 aa).

Cysteine 82 provides a ligand contact to (2R,3E)-phycoerythrobilin.

This sequence belongs to the phycobiliprotein family. In terms of assembly, homodimer. In terms of processing, contains one covalently linked phycoerythrobilin chromophore.

Green-light absorbing phycoerythrin of unknown function. The chain is R-phycoerythrin subunit beta (cpeB) from Prochlorococcus marinus (strain SARG / CCMP1375 / SS120).